A 267-amino-acid polypeptide reads, in one-letter code: Imidazole glycerol phosphate synthase subunit HisF (267 aa).

Catalysis depends on residues aspartate 21 and aspartate 140.

This sequence belongs to the HisA/HisF family. Heterodimer of HisH and HisF.

Its subcellular location is the cytoplasm. The catalysed reaction is 5-[(5-phospho-1-deoxy-D-ribulos-1-ylimino)methylamino]-1-(5-phospho-beta-D-ribosyl)imidazole-4-carboxamide + L-glutamine = D-erythro-1-(imidazol-4-yl)glycerol 3-phosphate + 5-amino-1-(5-phospho-beta-D-ribosyl)imidazole-4-carboxamide + L-glutamate + H(+). It functions in the pathway amino-acid biosynthesis; L-histidine biosynthesis; L-histidine from 5-phospho-alpha-D-ribose 1-diphosphate: step 5/9. Functionally, IGPS catalyzes the conversion of PRFAR and glutamine to IGP, AICAR and glutamate. The HisF subunit catalyzes the cyclization activity that produces IGP and AICAR from PRFAR using the ammonia provided by the HisH subunit. This Bordetella avium (strain 197N) protein is Imidazole glycerol phosphate synthase subunit HisF.